Here is a 544-residue protein sequence, read N- to C-terminus: CTP synthase (544 aa).

The segment at 1–265 (MTKFIFVTGG…DNIITEQLQL (265 aa)) is amidoligase domain. A CTP-binding site is contributed by serine 13. Residue serine 13 coordinates UTP. ATP-binding positions include 14-19 (SLGKGI) and aspartate 71. Mg(2+)-binding residues include aspartate 71 and glutamate 139. Residues 146 to 148 (DIE), 186 to 191 (KTKPTQ), and lysine 222 contribute to the CTP site. UTP-binding positions include 186-191 (KTKPTQ) and lysine 222. The region spanning 290–544 (KIAMVGKYVD…VKAALNNKKA (255 aa)) is the Glutamine amidotransferase type-1 domain. Glycine 353 lines the L-glutamine pocket. Cysteine 380 functions as the Nucleophile; for glutamine hydrolysis in the catalytic mechanism. L-glutamine contacts are provided by residues 381–384 (LGMQ), glutamate 404, and arginine 471. Active-site residues include histidine 517 and glutamate 519.

The protein belongs to the CTP synthase family. As to quaternary structure, homotetramer.

The enzyme catalyses UTP + L-glutamine + ATP + H2O = CTP + L-glutamate + ADP + phosphate + 2 H(+). It catalyses the reaction L-glutamine + H2O = L-glutamate + NH4(+). The catalysed reaction is UTP + NH4(+) + ATP = CTP + ADP + phosphate + 2 H(+). Its pathway is pyrimidine metabolism; CTP biosynthesis via de novo pathway; CTP from UDP: step 2/2. Its activity is regulated as follows. Allosterically activated by GTP, when glutamine is the substrate; GTP has no effect on the reaction when ammonia is the substrate. The allosteric effector GTP functions by stabilizing the protein conformation that binds the tetrahedral intermediate(s) formed during glutamine hydrolysis. Inhibited by the product CTP, via allosteric rather than competitive inhibition. Functionally, catalyzes the ATP-dependent amination of UTP to CTP with either L-glutamine or ammonia as the source of nitrogen. Regulates intracellular CTP levels through interactions with the four ribonucleotide triphosphates. This Neisseria meningitidis serogroup B (strain ATCC BAA-335 / MC58) protein is CTP synthase.